Here is a 383-residue protein sequence, read N- to C-terminus: Succinyl-diaminopimelate desuccinylase (383 aa).

His-73 contributes to the Zn(2+) binding site. The active site involves Asp-75. Asp-107 lines the Zn(2+) pocket. Catalysis depends on Glu-141, which acts as the Proton acceptor. Residues Glu-142, Glu-170, and His-356 each contribute to the Zn(2+) site.

This sequence belongs to the peptidase M20A family. DapE subfamily. As to quaternary structure, homodimer. Requires Zn(2+) as cofactor. The cofactor is Co(2+).

It carries out the reaction N-succinyl-(2S,6S)-2,6-diaminopimelate + H2O = (2S,6S)-2,6-diaminopimelate + succinate. The protein operates within amino-acid biosynthesis; L-lysine biosynthesis via DAP pathway; LL-2,6-diaminopimelate from (S)-tetrahydrodipicolinate (succinylase route): step 3/3. Its function is as follows. Catalyzes the hydrolysis of N-succinyl-L,L-diaminopimelic acid (SDAP), forming succinate and LL-2,6-diaminopimelate (DAP), an intermediate involved in the bacterial biosynthesis of lysine and meso-diaminopimelic acid, an essential component of bacterial cell walls. The protein is Succinyl-diaminopimelate desuccinylase of Pseudomonas aeruginosa (strain ATCC 15692 / DSM 22644 / CIP 104116 / JCM 14847 / LMG 12228 / 1C / PRS 101 / PAO1).